The primary structure comprises 542 residues: Tripartite motif-containing protein 26 (542 aa).

The segment at cysteine 16 to lysine 57 adopts an RING-type zinc-finger fold. The B box-type zinc finger occupies glutamine 97 to valine 138. Positions 102, 105, 124, and 130 each coordinate Zn(2+). Positions glutamine 197–glutamate 243 form a coiled coil. In terms of domain architecture, B30.2/SPRY spans arginine 298 to proline 542. Residues arginine 379–cysteine 440 form a disordered region. Composition is skewed to acidic residues over residues serine 383–glycine 405 and tryptophan 413–glutamine 437. Residues glutamate 411–cysteine 440 are a coiled coil.

The protein belongs to the TRIM/RBCC family. As to quaternary structure, interacts with TBK1; this interaction bridges together TBK1 and NEMO in order to activate TBK1. Interacts with INCA1. Post-translationally, autoubiquitinates upon viral infection. In turn, autoubiquitinated TRIM26 recruits NEMO and bridges TBK1-NEMO interaction.

The protein resides in the cytoplasm. It localises to the nucleus. It catalyses the reaction S-ubiquitinyl-[E2 ubiquitin-conjugating enzyme]-L-cysteine + [acceptor protein]-L-lysine = [E2 ubiquitin-conjugating enzyme]-L-cysteine + N(6)-ubiquitinyl-[acceptor protein]-L-lysine.. Its function is as follows. E3 ubiquitin-protein ligase which regulates the IFN-beta production and antiviral response downstream of various DNA-encoded pattern-recognition receptors (PRRs). Also plays a central role in determining the response to different forms of oxidative stress by controlling levels of DNA glycosylases NEIL1, NEIL3 and NTH1 that are involved in repair of damaged DNA. Promotes nuclear IRF3 ubiquitination and proteasomal degradation. Bridges together TBK1 and NEMO during the innate response to viral infection leading to the activation of TBK1. Positively regulates LPS-mediated inflammatory innate immune response by catalyzing the 'Lys-11'-linked polyubiquitination of TAB1 to enhance its activation and subsequent NF-kappa-B and MAPK signaling. In a manner independent of its catalytic activity, inhibits WWP2, a SOX2-directed E3 ubiquitin ligase, and thus protects SOX2 from polyubiquitination and proteasomal degradation. Ubiquitinates the histone acetyltransferase protein complex component PHF20 and thereby triggers its degradation in the nucleus after its recruitment by the histone demethylase KDM6B, serving as a scaffold protein. Upon induction by TGF-beta, ubiquitinates the TFIID component TAF7 for proteasomal degradation. Induces ferroptosis by ubiquitinating SLC7A11, a critical protein for lipid reactive oxygen species (ROS) scavenging. This is Tripartite motif-containing protein 26 (Trim26) from Rattus norvegicus (Rat).